A 256-amino-acid polypeptide reads, in one-letter code: Small ribosomal subunit protein eS1 (256 aa).

Ala2 bears the N-acetylalanine; partial mark.

It belongs to the eukaryotic ribosomal protein eS1 family. In terms of assembly, component of the small ribosomal subunit. Mature ribosomes consist of a small (40S) and a large (60S) subunit. The 40S subunit contains about 33 different proteins and 1 molecule of RNA (18S). The 60S subunit contains about 49 different proteins and 3 molecules of RNA (25S, 5.8S and 5S).

It localises to the cytoplasm. The protein is Small ribosomal subunit protein eS1 of Komagataella phaffii (strain GS115 / ATCC 20864) (Yeast).